The sequence spans 312 residues: Short-chain dehydrogenase/reductase pkfC (312 aa).

Residues lysine 56, asparagine 108, and lysine 140 each coordinate NADP(+). The Proton donor role is filled by serine 164. 2 residues coordinate NADP(+): tyrosine 193 and lysine 197. Residue tyrosine 193 is the Proton acceptor of the active site. Lysine 197 acts as the Lowers pKa of active site Tyr in catalysis.

Belongs to the short-chain dehydrogenases/reductases (SDR) family.

The protein operates within secondary metabolite biosynthesis. In terms of biological role, short-chain dehydrogenase/reductase; part of the gene cluster that mediates the biosynthesis of aspernidine A, a prenylated isoindolinone. The starting point of the biosynthesis of aspernidin A is the production of orsellinaldehyde by the non-reducing polyketide synthase pkfA. Hydroxylation, methylation of one of the phenol groups, and prenylation, presumably catalyzed by the prenyltransferase pkfE, would be needed to yield aspernidine D. Subsequently, the cytochrome P450 monooxygenase pkfB is responsible for hydroxylation of aspernidine D to yield aspernidine E. The dehydrogenase pkfF may be responsible for further oxidation of aspernidine E to form a dialdehyde intermediate which is further transformed in a series of steps, some of which are enzyme-mediated, to generate aspernidine A. The possibility that additional enzymes outside of the cluster are involved in aspernidine A biosynthesis cannot be excluded. The sequence is that of Short-chain dehydrogenase/reductase pkfC from Emericella nidulans (strain FGSC A4 / ATCC 38163 / CBS 112.46 / NRRL 194 / M139) (Aspergillus nidulans).